The sequence spans 118 residues: Myotrophin (118 aa).

ANK repeat units follow at residues 1 to 30 (MSDK…DVNR), 34 to 65 (GGRK…NAPD), and 67 to 98 (HNIT…TVKG).

Belongs to the myotrophin family.

It localises to the cytoplasm. It is found in the nucleus. The protein localises to the perinuclear region. Its function is as follows. Regulates NF-kappa-B transcription factor activity. Promotes growth of cardiomyocytes, but not cardiomyocyte proliferation. Promotes cardiac muscle hypertrophy. Plays a role in the regulation of the growth of actin filaments. Inhibits the activity of the F-actin-capping protein complex. The polypeptide is Myotrophin (MTPN) (Gallus gallus (Chicken)).